The following is a 273-amino-acid chain: Dermonecrotic toxin LhSicTox-alphaIA1i (273 aa).

The active site involves H5. Mg(2+) contacts are provided by E25 and D27. The active-site Nucleophile is H41. Disulfide bonds link C45-C51 and C47-C190. D85 provides a ligand contact to Mg(2+).

This sequence belongs to the arthropod phospholipase D family. Class II subfamily. The cofactor is Mg(2+). As to expression, expressed by the venom gland.

The protein resides in the secreted. It catalyses the reaction an N-(acyl)-sphingosylphosphocholine = an N-(acyl)-sphingosyl-1,3-cyclic phosphate + choline. The enzyme catalyses an N-(acyl)-sphingosylphosphoethanolamine = an N-(acyl)-sphingosyl-1,3-cyclic phosphate + ethanolamine. The catalysed reaction is a 1-acyl-sn-glycero-3-phosphocholine = a 1-acyl-sn-glycero-2,3-cyclic phosphate + choline. It carries out the reaction a 1-acyl-sn-glycero-3-phosphoethanolamine = a 1-acyl-sn-glycero-2,3-cyclic phosphate + ethanolamine. Its function is as follows. Dermonecrotic toxins cleave the phosphodiester linkage between the phosphate and headgroup of certain phospholipids (sphingolipid and lysolipid substrates), forming an alcohol (often choline) and a cyclic phosphate. This toxin acts on sphingomyelin (SM). It may also act on ceramide phosphoethanolamine (CPE), lysophosphatidylcholine (LPC) and lysophosphatidylethanolamine (LPE), but not on lysophosphatidylserine (LPS), and lysophosphatidylglycerol (LPG). It acts by transphosphatidylation, releasing exclusively cyclic phosphate products as second products. Induces dermonecrosis, hemolysis, increased vascular permeability, edema, inflammatory response, and platelet aggregation. The sequence is that of Dermonecrotic toxin LhSicTox-alphaIA1i from Loxosceles hirsuta (Recluse spider).